The primary structure comprises 228 residues: Cytidylate kinase (228 aa).

Position 17-25 (17-25 (GPSASGKGT)) interacts with ATP.

Belongs to the cytidylate kinase family. Type 1 subfamily.

It localises to the cytoplasm. The catalysed reaction is CMP + ATP = CDP + ADP. The enzyme catalyses dCMP + ATP = dCDP + ADP. This chain is Cytidylate kinase, found in Paraburkholderia xenovorans (strain LB400).